The chain runs to 133 residues: Large ribosomal subunit protein uL15 (133 aa).

The segment at Met-1–Pro-62 is disordered. Positions Thr-32–Ser-45 are enriched in polar residues.

This sequence belongs to the universal ribosomal protein uL15 family. As to quaternary structure, part of the 50S ribosomal subunit.

Its function is as follows. Binds to the 23S rRNA. In Nitratiruptor sp. (strain SB155-2), this protein is Large ribosomal subunit protein uL15.